A 435-amino-acid polypeptide reads, in one-letter code: NADH-quinone oxidoreductase subunit D 2 (435 aa).

Belongs to the complex I 49 kDa subunit family. In terms of assembly, NDH-1 is composed of 14 different subunits. Subunits NuoB, C, D, E, F, and G constitute the peripheral sector of the complex.

Its subcellular location is the cell inner membrane. It carries out the reaction a quinone + NADH + 5 H(+)(in) = a quinol + NAD(+) + 4 H(+)(out). Functionally, NDH-1 shuttles electrons from NADH, via FMN and iron-sulfur (Fe-S) centers, to quinones in the respiratory chain. The immediate electron acceptor for the enzyme in this species is believed to be ubiquinone. Couples the redox reaction to proton translocation (for every two electrons transferred, four hydrogen ions are translocated across the cytoplasmic membrane), and thus conserves the redox energy in a proton gradient. The sequence is that of NADH-quinone oxidoreductase subunit D 2 from Stenotrophomonas maltophilia (strain R551-3).